We begin with the raw amino-acid sequence, 1026 residues long: MRLPWELLVLQSFILCLADDSTLHGPIFIQEPSPVMFPLDSEEKKVKLNCEVKGNPKPHIRWKLNGTDVDTGMDFRYSVVEGSLLINNPNKTQDAGTYQCTATNSFGTIVSREAKLQFAYLDNFKTRTRSTVSVRRGQGMVLLCGPPPHSGELSYAWIFNEYPSYQDNRRFVSQETGNLYIAKVEKSDVGNYTCVVTNTVTNHKVLGPPTPLILRNDGVMGEYEPKIEVQFPETVPTAKGATVKLECFALGNPVPTIIWRRADGKPIARKARRHKSNGILEIPNFQQEDAGLYECVAENSRGKNVARGQLTFYAQPNWIQKINDIHVAMEENVFWECKANGRPKPTYKWLKNGEPLLTRDRIQIEQGTLNITIVNLSDAGMYQCLAENKHGVIFSNAELSVIAVGPDFSRTLLKRVTLVKVGGEVVIECKPKASPKPVYTWKKGRDILKENERITISEDGNLRIINVTKSDAGSYTCIATNHFGTASSTGNLVVKDPTRVMVPPSSMDVTVGESIVLPCQVTHDHSLDIVFTWSFNGHLIDFDRDGDHFERVGGQDSAGDLMIRNIQLKHAGKYVCMVQTSVDRLSAAADLIVRGPPGPPEAVTIDEITDTTAQLSWRPGPDNHSPITMYVIQARTPFSVGWQAVSTVPELIDGKTFTATVVGLNPWVEYEFRTVAANVIGIGEPSRPSEKRRTEEALPEVTPANVSGGGGSKSELVITWETVPEELQNGRGFGYVVAFRPYGKMIWMLTVLASADASRYVFRNESVHPFSPFEVKVGVFNNKGEGPFSPTTVVYSAEEEPTKPPASIFARSLSATDIEVFWASPLEKNRGRIQGYEVKYWRHEDKEENARKIRTVGNQTSTKITNLKGSVLYHLAVKAYNSAGTGPSSATVNVTTRKPPPSQPPGNIIWNSSDSKIILNWDQVKALDNESEVKGYKVLYRWNRQSSTSVIETNKTSVELSLPFDEDYIIEIKPFSDGGDGSSSEQIRIPKISNAYARGSGASTSNACTLSAISTIMISLTARSSL.

The first 18 residues, 1-18 (MRLPWELLVLQSFILCLA), serve as a signal peptide directing secretion. 6 consecutive Ig-like C2-type domains span residues 32-117 (PSPV…AKLQ), 122-207 (DNFK…KVLG), 225-311 (PKIE…GQLT), 316-400 (PNWI…AELS), 406-493 (PDFS…GNLV), and 497-586 (PTRV…DRLS). 6 disulfide bridges follow: Cys50–Cys100, Cys144–Cys194, Cys247–Cys295, Cys337–Cys384, Cys429–Cys477, and Cys519–Cys576. N-linked (GlcNAc...) asparagine glycans are attached at residues Asn65, Asn90, and Asn191. Residues Asn370, Asn375, and Asn466 are each glycosylated (N-linked (GlcNAc...) asparagine). 4 consecutive Fibronectin type-III domains span residues 599 to 697 (PPEA…TEEA), 702 to 799 (TPAN…SAEE), 804 to 899 (PPAS…TRKP), and 900 to 995 (PPSQ…ISNA). The segment at 685–710 (PSRPSEKRRTEEALPEVTPANVSGGG) is disordered. The span at 687–696 (RPSEKRRTEE) shows a compositional bias: basic and acidic residues. N-linked (GlcNAc...) asparagine glycans are attached at residues Asn705, Asn764, Asn858, Asn893, Asn911, Asn929, and Asn954. The span at 886 to 896 (GPSSATVNVTT) shows a compositional bias: polar residues. The tract at residues 886 to 907 (GPSSATVNVTTRKPPPSQPPGN) is disordered. Residue Ser1000 is the site of GPI-anchor amidated serine attachment. Positions 1001–1026 (GASTSNACTLSAISTIMISLTARSSL) are cleaved as a propeptide — removed in mature form.

Belongs to the immunoglobulin superfamily. Contactin family. In terms of assembly, interacts with PTPRG. In terms of tissue distribution, mainly expressed in brain. Highly expressed in cerebellum and weakly expressed in corpus callosum, caudate nucleus, amygdala and spinal cord. Also expressed in testis, pancreas, thyroid, uterus, small intestine and kidney. Not expressed in skeletal muscle. Isoform 2 is weakly expressed in cerebral cortex.

The protein resides in the cell membrane. It localises to the secreted. In terms of biological role, contactins mediate cell surface interactions during nervous system development. Has some neurite outgrowth-promoting activity. May be involved in synaptogenesis. The protein is Contactin-4 (CNTN4) of Homo sapiens (Human).